Consider the following 84-residue polypeptide: Small ribosomal subunit protein uS17 (84 aa).

This sequence belongs to the universal ribosomal protein uS17 family. In terms of assembly, part of the 30S ribosomal subunit.

One of the primary rRNA binding proteins, it binds specifically to the 5'-end of 16S ribosomal RNA. In Klebsiella pneumoniae subsp. pneumoniae (strain ATCC 700721 / MGH 78578), this protein is Small ribosomal subunit protein uS17.